Here is a 546-residue protein sequence, read N- to C-terminus: Glucose-6-phosphate isomerase (546 aa).

E352 serves as the catalytic Proton donor. Residues H383 and K511 contribute to the active site.

Belongs to the GPI family.

It localises to the cytoplasm. The catalysed reaction is alpha-D-glucose 6-phosphate = beta-D-fructose 6-phosphate. It functions in the pathway carbohydrate biosynthesis; gluconeogenesis. Its pathway is carbohydrate degradation; glycolysis; D-glyceraldehyde 3-phosphate and glycerone phosphate from D-glucose: step 2/4. Functionally, catalyzes the reversible isomerization of glucose-6-phosphate to fructose-6-phosphate. The sequence is that of Glucose-6-phosphate isomerase from Paramagnetospirillum magneticum (strain ATCC 700264 / AMB-1) (Magnetospirillum magneticum).